A 127-amino-acid polypeptide reads, in one-letter code: Small ribosomal subunit protein uS13 (127 aa).

The segment at His-92–Lys-127 is disordered. Basic residues predominate over residues Gln-101 to Lys-127.

This sequence belongs to the universal ribosomal protein uS13 family. As to quaternary structure, part of the 30S ribosomal subunit. Forms a loose heterodimer with protein S19. Forms two bridges to the 50S subunit in the 70S ribosome.

Located at the top of the head of the 30S subunit, it contacts several helices of the 16S rRNA. In the 70S ribosome it contacts the 23S rRNA (bridge B1a) and protein L5 of the 50S subunit (bridge B1b), connecting the 2 subunits; these bridges are implicated in subunit movement. Contacts the tRNAs in the A and P-sites. In Gloeothece citriformis (strain PCC 7424) (Cyanothece sp. (strain PCC 7424)), this protein is Small ribosomal subunit protein uS13.